A 191-amino-acid polypeptide reads, in one-letter code: Peptidyl-tRNA hydrolase (191 aa).

A tRNA-binding site is contributed by tyrosine 17. Catalysis depends on histidine 22, which acts as the Proton acceptor. TRNA is bound by residues tyrosine 68, asparagine 70, and asparagine 116.

It belongs to the PTH family. In terms of assembly, monomer.

It localises to the cytoplasm. The enzyme catalyses an N-acyl-L-alpha-aminoacyl-tRNA + H2O = an N-acyl-L-amino acid + a tRNA + H(+). Functionally, hydrolyzes ribosome-free peptidyl-tRNAs (with 1 or more amino acids incorporated), which drop off the ribosome during protein synthesis, or as a result of ribosome stalling. Catalyzes the release of premature peptidyl moieties from peptidyl-tRNA molecules trapped in stalled 50S ribosomal subunits, and thus maintains levels of free tRNAs and 50S ribosomes. The chain is Peptidyl-tRNA hydrolase from Mycobacterium marinum (strain ATCC BAA-535 / M).